Here is a 139-residue protein sequence, read N- to C-terminus: Putative nickel-responsive regulator (139 aa).

Ni(2+)-binding residues include His-79, His-90, His-92, and Cys-98.

The protein belongs to the transcriptional regulatory CopG/NikR family. Ni(2+) serves as cofactor.

Its function is as follows. Transcriptional regulator. The protein is Putative nickel-responsive regulator of Lawsonia intracellularis (strain PHE/MN1-00).